Here is a 769-residue protein sequence, read N- to C-terminus: Transferrin receptor protein 1 (769 aa).

The Cytoplasmic portion of the chain corresponds to 1-70 (MMDQARSAFS…KPKRFNGFIC (70 aa)). The interval 1-70 (MMDQARSAFS…KPKRFNGFIC (70 aa)) is mediates interaction with SH3BP4. Residues Ser10 and Ser19 each carry the phosphoserine modification. Tyr20 is subject to Phosphotyrosine. An Endocytosis signal motif is present at residues 20-23 (YTRF). Thr21 bears the Phosphothreonine mark. Residue Ser24 is modified to Phosphoserine. Positions 61 to 64 (KPKR) match the Stop-transfer sequence motif. Cys70 carries S-palmitoyl cysteine lipidation. A helical; Signal-anchor for type II membrane protein membrane pass occupies residues 71–91 (YGTIAIILFFLIGFMIGYLGY). Residues 92–769 (CKRVEAKSEC…GDIWDIDNEF (678 aa)) lie on the Extracellular side of the membrane. Thr107 carries an O-linked (GalNAc...) threonine glycan. The 91-residue stretch at 232-322 (SKAATVTGRL…GTGDPYTPGF (91 aa)) folds into the PA domain. 2 N-linked (GlcNAc...) asparagine glycosylation sites follow: Asn260 and Asn326. Positions 578–769 (TMDVYEKLIQ…GDIWDIDNEF (192 aa)) are ligand-binding. A Cell attachment site motif is present at residues 655–657 (RGD). N-linked (GlcNAc...) asparagine glycans are attached at residues Asn731 and Asn736.

This sequence belongs to the peptidase M28 family. M28B subfamily. In terms of assembly, homodimer; disulfide-linked. Binds one transferrin molecule per subunit. Interacts with SH3BP4. Homodimer; disulfide-linked. Binds one transferrin or HFE molecule per subunit. Binds the HLA class II histocompatibility antigen, DR1. Interacts with SH3BP3. Interacts with STEAP3; facilitates TFRC endocytosis in erythroid precursor cells. In terms of processing, stearoylated by ZDHHC6 which inhibits TFRC-mediated activation of the JNK pathway and promotes mitochondrial fragmentation. Stearoylation does not affect iron uptake. N- and O-glycosylated, phosphorylated and palmitoylated.

The protein resides in the cell membrane. It localises to the melanosome. In terms of biological role, cellular uptake of iron occurs via receptor-mediated endocytosis of ligand-occupied transferrin receptor into specialized endosomes. Endosomal acidification leads to iron release. The apotransferrin-receptor complex is then recycled to the cell surface with a return to neutral pH and the concomitant loss of affinity of apotransferrin for its receptor. Transferrin receptor is necessary for development of erythrocytes and the nervous system. Positively regulates T and B cell proliferation through iron uptake. Acts as a lipid sensor that regulates mitochondrial fusion by regulating activation of the JNK pathway. When dietary levels of stearate (C18:0) are low, promotes activation of the JNK pathway, resulting in HUWE1-mediated ubiquitination and subsequent degradation of the mitofusin MFN2 and inhibition of mitochondrial fusion. When dietary levels of stearate (C18:0) are high, TFRC stearoylation inhibits activation of the JNK pathway and thus degradation of the mitofusin MFN2. Mediates uptake of NICOL1 into fibroblasts where it may regulate extracellular matrix production. The sequence is that of Transferrin receptor protein 1 (TFRC) from Felis catus (Cat).